The primary structure comprises 258 residues: Protease HtpX homolog (258 aa).

Helical transmembrane passes span 24-44 (VLLF…LGLG) and 45-65 (GPLF…LISP). H146 contacts Zn(2+). E147 is an active-site residue. H150 provides a ligand contact to Zn(2+). 2 consecutive transmembrane segments (helical) span residues 157-177 (IVMT…WSTV) and 186-206 (LVGI…LFIS). E210 serves as a coordination point for Zn(2+).

This sequence belongs to the peptidase M48B family. Requires Zn(2+) as cofactor.

The protein resides in the cell membrane. This Methanothermobacter thermautotrophicus (strain ATCC 29096 / DSM 1053 / JCM 10044 / NBRC 100330 / Delta H) (Methanobacterium thermoautotrophicum) protein is Protease HtpX homolog.